Consider the following 115-residue polypeptide: Translation initiation factor 1A 2 (115 aa).

The interval 1–34 (MANYRSTIRHRNSGSRKSVSGDTHEVTRVRTPQK) is disordered. Basic and acidic residues predominate over residues 22–34 (DTHEVTRVRTPQK). The region spanning 27-101 (TRVRTPQKDR…SKADVTWKYT (75 aa)) is the S1-like domain.

It belongs to the eIF-1A family.

Functionally, seems to be required for maximal rate of protein biosynthesis. Enhances ribosome dissociation into subunits and stabilizes the binding of the initiator Met-tRNA(I) to 40 S ribosomal subunits. This is Translation initiation factor 1A 2 from Methanosarcina barkeri (strain Fusaro / DSM 804).